The sequence spans 187 residues: MIRGGDIAKGTVLLNKGTPYLVVEREFVNPGKGAAFARVKMKNLRDGSVLMQTIKTADTVEDAVVDTHKCQYQYKDGDQFMFMDTESFESISVPAETIGDKEHYLREGDEYDILIWENEPIDVRIPTKMIFIVEQSENYIKGDTVSGATKPIVTETGLVVRVPLFIKQGEKILVNTETNEYQERVNS.

It belongs to the elongation factor P family.

It is found in the cytoplasm. It functions in the pathway protein biosynthesis; polypeptide chain elongation. Involved in peptide bond synthesis. Stimulates efficient translation and peptide-bond synthesis on native or reconstituted 70S ribosomes in vitro. Probably functions indirectly by altering the affinity of the ribosome for aminoacyl-tRNA, thus increasing their reactivity as acceptors for peptidyl transferase. The sequence is that of Elongation factor P from Treponema denticola (strain ATCC 35405 / DSM 14222 / CIP 103919 / JCM 8153 / KCTC 15104).